Reading from the N-terminus, the 873-residue chain is Envelope glycoprotein B (873 aa).

The signal sequence occupies residues 1–21 (MASLKMLICVCVAILIPSTLS). At 22 to 740 (QDSHGIAGII…SGIASFLSNP (719 aa)) the chain is on the virion surface side. Intrachain disulfides connect Cys-67-Cys-525, Cys-84-Cys-481, Cys-157-Cys-219, Cys-311-Cys-359, and Cys-548-Cys-598. N-linked (GlcNAc...) asparagine; by host glycans are attached at residues Asn-92 and Asn-111. The involved in fusion and/or binding to host membrane stretch occupies residues 124–130 (TWALFSR). Asn-201 carries an N-linked (GlcNAc...) asparagine; by host glycan. The interval 206-213 (HQTLGYRT) is involved in fusion and/or binding to host membrane. 2 N-linked (GlcNAc...) asparagine; by host glycosylation sites follow: Asn-252 and Asn-350. The disordered stretch occupies residues 418-447 (QNHLPRGRERRQAAGRRTASLQSGPQGDRI). Residues Asn-569, Asn-625, and Asn-639 are each glycosylated (N-linked (GlcNAc...) asparagine; by host). Hydrophobic membrane proximal region regions lie at residues 684–738 (IDTV…SFLS) and 715–734 (LGTV…SGIA). A helical membrane pass occupies residues 741 to 761 (FAALGIGIAVVVSIILGLLAF). The Intravirion portion of the chain corresponds to 762-873 (KYVMNLKSNP…PSWAEESEDE (112 aa)). Positions 781–807 (PPAGTPPRPSRRYYKDEEEVEEDSDED) are disordered. A compositionally biased stretch (acidic residues) spans 796 to 807 (DEEEVEEDSDED). The Internalization motif signature appears at 858–861 (YPLL).

The protein belongs to the herpesviridae glycoprotein B family. Homotrimer; disulfide-linked. Binds to heparan sulfate proteoglycans. Interacts with gH/gL heterodimer. A proteolytic cleavage by host furin generates two subunits that remain linked by disulfide bonds.

The protein resides in the virion membrane. It is found in the host cell membrane. Its subcellular location is the host endosome membrane. The protein localises to the host Golgi apparatus membrane. In terms of biological role, envelope glycoprotein that forms spikes at the surface of virion envelope. Essential for the initial attachment to heparan sulfate moieties of the host cell surface proteoglycans. Involved in fusion of viral and cellular membranes leading to virus entry into the host cell. Following initial binding to its host receptors, membrane fusion is mediated by the fusion machinery composed at least of gB and the heterodimer gH/gL. May be involved in the fusion between the virion envelope and the outer nuclear membrane during virion egress. This chain is Envelope glycoprotein B, found in Infectious laryngotracheitis virus (strain 632) (ILTV).